Here is a 328-residue protein sequence, read N- to C-terminus: Probable nicotianamine synthase 6 (328 aa).

Belongs to the nicotianamine synthase (NAS)-like family.

The catalysed reaction is 3 S-adenosyl-L-methionine = nicotianamine + 3 S-methyl-5'-thioadenosine + 3 H(+). Functionally, synthesizes nicotianamine, a polyamine that is the first intermediate in the synthesis of the phytosiderophores of the mugineic acid type found in gramineae which serves as a sensor for the physiological iron status within the plant, and/or might be involved in the transport of iron. This chain is Probable nicotianamine synthase 6 (NAS6), found in Hordeum vulgare (Barley).